Here is a 228-residue protein sequence, read N- to C-terminus: Protein GrpE (228 aa).

Disordered regions lie at residues 1–31 (MADE…NRAA) and 209–228 (GVSK…EGNG).

This sequence belongs to the GrpE family. Homodimer.

Its subcellular location is the cytoplasm. Functionally, participates actively in the response to hyperosmotic and heat shock by preventing the aggregation of stress-denatured proteins, in association with DnaK and GrpE. It is the nucleotide exchange factor for DnaK and may function as a thermosensor. Unfolded proteins bind initially to DnaJ; upon interaction with the DnaJ-bound protein, DnaK hydrolyzes its bound ATP, resulting in the formation of a stable complex. GrpE releases ADP from DnaK; ATP binding to DnaK triggers the release of the substrate protein, thus completing the reaction cycle. Several rounds of ATP-dependent interactions between DnaJ, DnaK and GrpE are required for fully efficient folding. In Brucella anthropi (strain ATCC 49188 / DSM 6882 / CCUG 24695 / JCM 21032 / LMG 3331 / NBRC 15819 / NCTC 12168 / Alc 37) (Ochrobactrum anthropi), this protein is Protein GrpE.